A 193-amino-acid polypeptide reads, in one-letter code: Pyridoxal 5'-phosphate synthase subunit PdxT (193 aa).

48–50 (GES) contacts L-glutamine. Catalysis depends on Cys80, which acts as the Nucleophile. L-glutamine contacts are provided by residues Arg112 and 140–141 (IR). Active-site charge relay system residues include His176 and Glu178.

The protein belongs to the glutaminase PdxT/SNO family. In terms of assembly, in the presence of PdxS, forms a dodecamer of heterodimers. Only shows activity in the heterodimer.

It carries out the reaction aldehydo-D-ribose 5-phosphate + D-glyceraldehyde 3-phosphate + L-glutamine = pyridoxal 5'-phosphate + L-glutamate + phosphate + 3 H2O + H(+). The catalysed reaction is L-glutamine + H2O = L-glutamate + NH4(+). It participates in cofactor biosynthesis; pyridoxal 5'-phosphate biosynthesis. Functionally, catalyzes the hydrolysis of glutamine to glutamate and ammonia as part of the biosynthesis of pyridoxal 5'-phosphate. The resulting ammonia molecule is channeled to the active site of PdxS. The protein is Pyridoxal 5'-phosphate synthase subunit PdxT of Mycolicibacterium smegmatis (strain ATCC 700084 / mc(2)155) (Mycobacterium smegmatis).